We begin with the raw amino-acid sequence, 181 residues long: Shikimate kinase (181 aa).

17-22 (GAGKTT) is a binding site for ATP. T21 is a binding site for Mg(2+). Positions 39, 63, and 85 each coordinate substrate. Position 122 (R122) interacts with ATP. R141 contacts substrate.

This sequence belongs to the shikimate kinase family. In terms of assembly, monomer. Mg(2+) is required as a cofactor.

The protein localises to the cytoplasm. The catalysed reaction is shikimate + ATP = 3-phosphoshikimate + ADP + H(+). It functions in the pathway metabolic intermediate biosynthesis; chorismate biosynthesis; chorismate from D-erythrose 4-phosphate and phosphoenolpyruvate: step 5/7. Functionally, catalyzes the specific phosphorylation of the 3-hydroxyl group of shikimic acid using ATP as a cosubstrate. The chain is Shikimate kinase from Nostoc sp. (strain PCC 7120 / SAG 25.82 / UTEX 2576).